Reading from the N-terminus, the 136-residue chain is Small ribosomal subunit protein uS8c (136 aa).

It belongs to the universal ribosomal protein uS8 family. As to quaternary structure, part of the 30S ribosomal subunit.

It is found in the plastid. The protein resides in the chloroplast. Functionally, one of the primary rRNA binding proteins, it binds directly to 16S rRNA central domain where it helps coordinate assembly of the platform of the 30S subunit. This chain is Small ribosomal subunit protein uS8c (rps8), found in Saccharum hybrid (Sugarcane).